Consider the following 141-residue polypeptide: MAKKVIGFIKLQIPAGGANPAPPVGPALGQKGVNIMEFCKQFNAKTQADAGTIIPVVITVYSDKSFTFITKTPPAPVLLLKEANQKKGSGEPNRNKVGTVTGEQVRKIAELKMPDLNAVDLAGAEAMIRGTARSMGIVVQD.

The protein belongs to the universal ribosomal protein uL11 family. In terms of assembly, part of the ribosomal stalk of the 50S ribosomal subunit. Interacts with L10 and the large rRNA to form the base of the stalk. L10 forms an elongated spine to which L12 dimers bind in a sequential fashion forming a multimeric L10(L12)X complex. Post-translationally, one or more lysine residues are methylated.

Its function is as follows. Forms part of the ribosomal stalk which helps the ribosome interact with GTP-bound translation factors. The chain is Large ribosomal subunit protein uL11 from Chlorobium chlorochromatii (strain CaD3).